The sequence spans 305 residues: HPr kinase/phosphorylase (305 aa).

Catalysis depends on residues His136 and Lys157. 151–158 is an ATP binding site; the sequence is GESGIGKS. A Mg(2+)-binding site is contributed by Ser158. Asp175 functions as the Proton acceptor; for phosphorylation activity. Proton donor; for dephosphorylation activity in the catalytic mechanism. An important for the catalytic mechanism of both phosphorylation and dephosphorylation region spans residues 198-207; it reads LEVRGLGIID. Residue Glu199 coordinates Mg(2+). The active site involves Arg240. An important for the catalytic mechanism of dephosphorylation region spans residues 261–266; that stretch reads PIRPGR.

Belongs to the HPrK/P family. Homohexamer. Mg(2+) serves as cofactor.

It catalyses the reaction [HPr protein]-L-serine + ATP = [HPr protein]-O-phospho-L-serine + ADP + H(+). The enzyme catalyses [HPr protein]-O-phospho-L-serine + phosphate + H(+) = [HPr protein]-L-serine + diphosphate. Its function is as follows. Catalyzes the ATP- as well as the pyrophosphate-dependent phosphorylation of a specific serine residue in HPr, a phosphocarrier protein of the phosphoenolpyruvate-dependent sugar phosphotransferase system (PTS). HprK/P also catalyzes the pyrophosphate-producing, inorganic phosphate-dependent dephosphorylation (phosphorolysis) of seryl-phosphorylated HPr (P-Ser-HPr). The two antagonistic activities of HprK/P are regulated by several intracellular metabolites, which change their concentration in response to the absence or presence of rapidly metabolisable carbon sources (glucose, fructose, etc.) in the growth medium. Therefore, by controlling the phosphorylation state of HPr, HPrK/P is a sensor enzyme that plays a major role in the regulation of carbon metabolism and sugar transport: it mediates carbon catabolite repression (CCR), and regulates PTS-catalyzed carbohydrate uptake and inducer exclusion. The protein is HPr kinase/phosphorylase of Clostridium tetani (strain Massachusetts / E88).